The sequence spans 61 residues: Large ribosomal subunit protein bL28 (61 aa).

The protein belongs to the bacterial ribosomal protein bL28 family.

This is Large ribosomal subunit protein bL28 from Nautilia profundicola (strain ATCC BAA-1463 / DSM 18972 / AmH).